Here is a 725-residue protein sequence, read N- to C-terminus: Phosphoribosylformylglycinamidine synthase subunit PurL (725 aa).

Residue His41 is part of the active site. ATP contacts are provided by Tyr44 and Lys83. Glu85 serves as a coordination point for Mg(2+). Residues 86-89 and Arg108 each bind substrate; that span reads SHNH. The active-site Proton acceptor is the His87. Asp109 provides a ligand contact to Mg(2+). A substrate-binding site is contributed by Gln231. Residue Asp259 participates in Mg(2+) binding. 303-305 lines the substrate pocket; it reads ESQ. Positions 485 and 522 each coordinate ATP. Asn523 is a binding site for Mg(2+). Ser525 lines the substrate pocket.

This sequence belongs to the FGAMS family. Monomer. Part of the FGAM synthase complex composed of 1 PurL, 1 PurQ and 2 PurS subunits.

The protein resides in the cytoplasm. It carries out the reaction N(2)-formyl-N(1)-(5-phospho-beta-D-ribosyl)glycinamide + L-glutamine + ATP + H2O = 2-formamido-N(1)-(5-O-phospho-beta-D-ribosyl)acetamidine + L-glutamate + ADP + phosphate + H(+). Its pathway is purine metabolism; IMP biosynthesis via de novo pathway; 5-amino-1-(5-phospho-D-ribosyl)imidazole from N(2)-formyl-N(1)-(5-phospho-D-ribosyl)glycinamide: step 1/2. Its function is as follows. Part of the phosphoribosylformylglycinamidine synthase complex involved in the purines biosynthetic pathway. Catalyzes the ATP-dependent conversion of formylglycinamide ribonucleotide (FGAR) and glutamine to yield formylglycinamidine ribonucleotide (FGAM) and glutamate. The FGAM synthase complex is composed of three subunits. PurQ produces an ammonia molecule by converting glutamine to glutamate. PurL transfers the ammonia molecule to FGAR to form FGAM in an ATP-dependent manner. PurS interacts with PurQ and PurL and is thought to assist in the transfer of the ammonia molecule from PurQ to PurL. The polypeptide is Phosphoribosylformylglycinamidine synthase subunit PurL (Thermus thermophilus (strain ATCC BAA-163 / DSM 7039 / HB27)).